Reading from the N-terminus, the 459-residue chain is UDP-N-acetylmuramoylalanine--D-glutamate ligase (459 aa).

119–125 (GTNGKTT) contacts ATP.

It belongs to the MurCDEF family.

The protein resides in the cytoplasm. The enzyme catalyses UDP-N-acetyl-alpha-D-muramoyl-L-alanine + D-glutamate + ATP = UDP-N-acetyl-alpha-D-muramoyl-L-alanyl-D-glutamate + ADP + phosphate + H(+). It functions in the pathway cell wall biogenesis; peptidoglycan biosynthesis. In terms of biological role, cell wall formation. Catalyzes the addition of glutamate to the nucleotide precursor UDP-N-acetylmuramoyl-L-alanine (UMA). This Lacticaseibacillus casei (strain BL23) (Lactobacillus casei) protein is UDP-N-acetylmuramoylalanine--D-glutamate ligase.